Reading from the N-terminus, the 100-residue chain is Spleen trypsin inhibitor I (100 aa).

Residues 1–21 (MKMSRLCLSIALLVLLGTLAA) form the signal peptide. Positions 22–33 (STPGCDTSNQAK) are excised as a propeptide. The 51-residue stretch at 40–90 (CLEPPYTGPCKAKMIRYFYNAKAGFCETFVYGGCKAKSNNFRSAEDCMRTC) folds into the BPTI/Kunitz inhibitor domain. 3 disulfide bridges follow: C40–C90, C49–C73, and C65–C86. Residue L100 is a propeptide.

Its subcellular location is the secreted. The protein is Spleen trypsin inhibitor I of Bos taurus (Bovine).